Consider the following 236-residue polypeptide: MSESSSEDENTARLKEAVWSFKPEDVKINGKENNGRQSHRADVSKHEHDGNELGTTPEFRSHVAKKLGTYLDGCISEVCSDTVEPAQSENREDEEGFRLFSSSTPGKWMEQSPPPPPKRRPVPSSSDSDSEMEMRFREAAVSLSDILGPVAQNLSEKTEEKSTKEETEDTVTKMKKKKKRKTSSEESQDKVNHQTEKQSNVEGNQEQTTAGERLKKKKKKKKKKRKKLEKDIKKDE.

Disordered stretches follow at residues 1–57 (MSES…GTTP) and 83–236 (VEPA…KKDE). 2 stretches are compositionally biased toward basic and acidic residues: residues 10-51 (NTAR…HDGN) and 156-165 (EKTEEKSTKE). Residues 173–181 (KMKKKKKRK) carry the Nucleolar localization signal (NLS1) motif. Basic and acidic residues predominate over residues 182–196 (TSSEESQDKVNHQTE). Residues 197–210 (KQSNVEGNQEQTTA) show a composition bias toward polar residues. A Nucleolar localization signal (NLS2) motif is present at residues 211–219 (GERLKKKKK). Positions 214–227 (LKKKKKKKKKKRKK) are enriched in basic residues.

Belongs to the CUSTOS family. In terms of assembly, interacts (via NLS1 and NLS2) with dvl2; the interaction is negatively regulated by Wnt stimulation. Interacts with csnk1a1. Interacts with ctnnb1; the interaction is positively regulated by Wnt stimulation. Phosphorylated by ck1/csnk1a1.

It localises to the nucleus envelope. In terms of biological role, essential for Spemann-Mangold organizer formation and subsequent anterior head development in the embryo. Inhibits canonical Wnt signaling pathway by antagonizing nuclear import of beta-catenin (ctnnb1) during embryogenesis. This is Protein CUSTOS from Danio rerio (Zebrafish).